A 319-amino-acid chain; its full sequence is MKRRTFLAMSLALTFLPSVALADNIPVRVGYIADYWGTSITAIASEKGLWEKHGLDADTRVFTNGPIQVQALGAGSLDFGYIGPGALWLPASGKAKIVAINSVGFSDRVIAQEGFKSMADLKGKKIGVPEGTSGDMLLRLALGKAGMKLDDVQVIKMDPSTVVSAFASKQIDAAGIWYPLIGTIKEHVPGMVELAANSDFFPDKTFPSAFIARNEIVAENPEAVKRMIAVIEEAEDFRTANPEQSVDITAKFLKVDKANLETEAKNGKSLTSEELVKLTRDGSVNGWLSGMADMFVTFGKLKSPLDPKDYYLADYFTAK.

The first 22 residues, methionine 1–alanine 22, serve as a signal peptide directing secretion.

Belongs to the bacterial solute-binding protein SsuA/TauA family. As to quaternary structure, the complex is composed of two ATP-binding proteins (BAB2_1147), two transmembrane proteins (BAB2_1148) and a solute-binding protein (BAB2_1146).

It localises to the periplasm. Its function is as follows. Probably part of an ABC transporter complex. The protein is Putative binding protein BAB2_1146 of Brucella abortus (strain 2308).